Reading from the N-terminus, the 127-residue chain is Large ribosomal subunit protein uL22 (127 aa).

Belongs to the universal ribosomal protein uL22 family. As to quaternary structure, part of the 50S ribosomal subunit.

In terms of biological role, this protein binds specifically to 23S rRNA; its binding is stimulated by other ribosomal proteins, e.g. L4, L17, and L20. It is important during the early stages of 50S assembly. It makes multiple contacts with different domains of the 23S rRNA in the assembled 50S subunit and ribosome. The globular domain of the protein is located near the polypeptide exit tunnel on the outside of the subunit, while an extended beta-hairpin is found that lines the wall of the exit tunnel in the center of the 70S ribosome. The chain is Large ribosomal subunit protein uL22 from Rhizorhabdus wittichii (strain DSM 6014 / CCUG 31198 / JCM 15750 / NBRC 105917 / EY 4224 / RW1) (Sphingomonas wittichii).